The sequence spans 428 residues: Enolase 2 (428 aa).

Position 162 (Q162) interacts with (2R)-2-phosphoglycerate. E204 (proton donor) is an active-site residue. Mg(2+) is bound by residues D241, E285, and D312. (2R)-2-phosphoglycerate-binding residues include K337, R366, S367, and K388. K337 serves as the catalytic Proton acceptor.

This sequence belongs to the enolase family. Requires Mg(2+) as cofactor.

It localises to the cytoplasm. The protein resides in the secreted. It is found in the cell surface. It carries out the reaction (2R)-2-phosphoglycerate = phosphoenolpyruvate + H2O. It participates in carbohydrate degradation; glycolysis; pyruvate from D-glyceraldehyde 3-phosphate: step 4/5. In terms of biological role, catalyzes the reversible conversion of 2-phosphoglycerate (2-PG) into phosphoenolpyruvate (PEP). It is essential for the degradation of carbohydrates via glycolysis. The protein is Enolase 2 of Lactobacillus johnsonii (strain CNCM I-12250 / La1 / NCC 533).